We begin with the raw amino-acid sequence, 399 residues long: Zinc metalloproteinase nas-25 (399 aa).

An N-terminal signal peptide occupies residues 1–20 (MQIYLGITICLVAFLTVIDC). One can recognise a Peptidase M12A domain in the interval 41 to 237 (QVQRDLTYRW…DQINQYYQCY (197 aa)). 2 N-linked (GlcNAc...) asparagine glycosylation sites follow: Asn-52 and Asn-61. 4 disulfides stabilise this stretch: Cys-82–Cys-236, Cys-106–Cys-126, Cys-240–Cys-260, and Cys-265–Cys-274. His-134 is a Zn(2+) binding site. Glu-135 is a catalytic residue. Residues His-138 and His-144 each coordinate Zn(2+). The region spanning 232–275 (QYYQCYDSCRNAGQLANCANGGIPNPNNCQVCNCPMGYGGDLCD) is the EGF-like domain. An N-linked (GlcNAc...) asparagine glycan is attached at Asn-371.

It depends on Zn(2+) as a cofactor. As to expression, expressed in pharyngeal muscles, pharyngeal-intestinal valve, rectal gland cells and arcade cells.

The protein localises to the secreted. Its function is as follows. Metalloprotease. This Caenorhabditis elegans protein is Zinc metalloproteinase nas-25 (nas-25).